A 366-amino-acid polypeptide reads, in one-letter code: Dof zinc finger protein DOF1.3 (366 aa).

A disordered region spans residues 22–103; sequence DPYSSSSHVL…KTTELKKPDK (82 aa). Composition is skewed to low complexity over residues 25-45 and 56-69; these read SSSSHVLPDSSSSSSSSSLSL and TDNTSLKLSSNLNN. Composition is skewed to basic and acidic residues over residues 70–83 and 91–103; these read ESKETSENSDDQHS and EEEKTTELKKPDK. The segment at 105–159 adopts a Dof-type zinc-finger fold; it reads LPCPRCNSADTKFCYYNNYNVNQPRHFCRKCQRYWTAGGSMRIVPVGSGRRKNKG. Zn(2+) is bound by residues Cys107, Cys110, Cys132, and Cys135.

The protein resides in the nucleus. Its function is as follows. Transcription factor that binds specifically to a 5'-AA[AG]G-3' consensus core sequence. The chain is Dof zinc finger protein DOF1.3 (DOF1.3) from Arabidopsis thaliana (Mouse-ear cress).